The chain runs to 183 residues: Glutathione-regulated potassium-efflux system ancillary protein KefG (183 aa).

Belongs to the NAD(P)H dehydrogenase (quinone) family. KefG subfamily. Interacts with KefB.

Its subcellular location is the cell inner membrane. The enzyme catalyses a quinone + NADH + H(+) = a quinol + NAD(+). It carries out the reaction a quinone + NADPH + H(+) = a quinol + NADP(+). In terms of biological role, regulatory subunit of a potassium efflux system that confers protection against electrophiles. Required for full activity of KefB. The polypeptide is Glutathione-regulated potassium-efflux system ancillary protein KefG (Salmonella paratyphi B (strain ATCC BAA-1250 / SPB7)).